A 292-amino-acid polypeptide reads, in one-letter code: 2-methylisocitrate lyase (292 aa).

44–46 (SGA) contributes to the substrate binding site. 2 residues coordinate Mg(2+): Asp-84 and Asp-86. Substrate is bound by residues 121–122 (CG), Arg-156, Glu-186, 208–210 (NMT), Arg-239, and Arg-268.

The protein belongs to the isocitrate lyase/PEP mutase superfamily. Methylisocitrate lyase family. In terms of assembly, homotetramer; dimer of dimers. Mg(2+) serves as cofactor.

The catalysed reaction is (2S,3R)-3-hydroxybutane-1,2,3-tricarboxylate = pyruvate + succinate. The protein operates within organic acid metabolism; propanoate degradation. Involved in the catabolism of short chain fatty acids (SCFA) via the 2-methylcitrate cycle I (propionate degradation route). Catalyzes the thermodynamically favored C-C bond cleavage of (2R,3S)-2-methylisocitrate to yield pyruvate and succinate via an alpha-carboxy-carbanion intermediate. In Shewanella oneidensis (strain ATCC 700550 / JCM 31522 / CIP 106686 / LMG 19005 / NCIMB 14063 / MR-1), this protein is 2-methylisocitrate lyase.